Here is a 243-residue protein sequence, read N- to C-terminus: PF03932 family protein CutC (243 aa).

It belongs to the CutC family.

It localises to the cytoplasm. The protein is PF03932 family protein CutC of Histophilus somni (strain 2336) (Haemophilus somnus).